We begin with the raw amino-acid sequence, 176 residues long: MMDWYAIQTYSGSEQSVKKAIENLANDHNIRDRIQEIIVPTEDIIEVSKKSKTKVTERSLYPGYVFIKVDLDTVLWHKIQSLPRVSRFIGENKKPTPLSEADIGHILEKMNNRAAPKPKIFFEQGEVVRVVEGPFANFTATVEEYDVEHRKLKLNVSIFGRNTPIEILHSQVEKII.

Residues 125–149 (GEVVRVVEGPFANFTATVEEYDVEH) enclose the KOW domain.

Belongs to the NusG family.

In terms of biological role, participates in transcription elongation, termination and antitermination. The sequence is that of Transcription termination/antitermination protein NusG from Helicobacter pylori (strain ATCC 700392 / 26695) (Campylobacter pylori).